A 267-amino-acid chain; its full sequence is tRNA (guanine-N(1)-)-methyltransferase (267 aa).

S-adenosyl-L-methionine contacts are provided by residues Gly119 and 139–144; that span reads IGDYVL.

It belongs to the RNA methyltransferase TrmD family. In terms of assembly, homodimer.

Its subcellular location is the cytoplasm. The catalysed reaction is guanosine(37) in tRNA + S-adenosyl-L-methionine = N(1)-methylguanosine(37) in tRNA + S-adenosyl-L-homocysteine + H(+). Functionally, specifically methylates guanosine-37 in various tRNAs. The protein is tRNA (guanine-N(1)-)-methyltransferase of Chromohalobacter salexigens (strain ATCC BAA-138 / DSM 3043 / CIP 106854 / NCIMB 13768 / 1H11).